The primary structure comprises 274 residues: D-aminoacyl-tRNA deacylase (274 aa).

It belongs to the DtdA deacylase family. Monomer. Requires Zn(2+) as cofactor.

It catalyses the reaction a D-aminoacyl-tRNA + H2O = a tRNA + a D-alpha-amino acid + H(+). It carries out the reaction glycyl-tRNA(Ala) + H2O = tRNA(Ala) + glycine + H(+). Its function is as follows. D-aminoacyl-tRNA deacylase with broad substrate specificity. By recycling D-aminoacyl-tRNA to D-amino acids and free tRNA molecules, this enzyme counteracts the toxicity associated with the formation of D-aminoacyl-tRNA entities in vivo. The protein is D-aminoacyl-tRNA deacylase of Pyrococcus horikoshii (strain ATCC 700860 / DSM 12428 / JCM 9974 / NBRC 100139 / OT-3).